Reading from the N-terminus, the 800-residue chain is MSRRRAHDTEDEGYDHRRNKRRRVSENQEIEDRLESLILRVGERSTSSVESNLEGLVSVLEADLGTFRLKILRILSDCAVRMPEKCTVYTTLVGLLNAKNYKFGGEFVDHMVKTFKESLKLCRWDAARYSLRFLADLVNCHVISATSLLQLLDTMIDVSNEDTVPQVRRDWFVFAVLSTLPWVGRDLYEKKESALESLLLRIEVYLNKRSKKHHNALRVWSSDAPHPQEEYLDCLWAQIRKLRQDNWAEKHIPRPYLVFDSILCEALQHNLPQIVPPSHHDAFEYPMPWVVYRMFDYTDCPDGPNLPGAHSIERFLIEEHLHHIIETYHHERKDCAAQLLSFPFKHKIPLEYCIVEVIFAELFHMPTPRYLDICYGSILIELCKLQPATLPQVLAQATEILFMRIDSMNTSCFDRFVNWFSYHLSNFKFTWSWDEWDSCLLLDAEHPRPKFIQEVLQKCLRLSYHQRITEMMPTTYLKLIPPTPSPNYKYANEEAANLPGTTVAHQLVVAIRQKCLPEEVVNILKEIPSSGYSGEEMSDGSFNALKIDVFVQTLLNLGSKSFSHSFAAISKFHSVFRALAETEEAQICILHNIFELWSTHQQMMVVLIDKLLKLQIVDCSAVATWIFSKEMTGEFTKMYLWEILHLTIKKMNKHVIKLNTELSEAKDKLSKADSSSSDSDDDTPHKRKKPITHADKPSEEVVERMEEKLEAANVNQKRLFLIVFQRFIMILSEHLLRSDTDGRDPDTDWYRWTIGRLQQVFLMHHEQVQKYSSTLETLLFTSDLDTHILEVFQQFVALRA.

The disordered stretch occupies residues 1 to 26 (MSRRRAHDTEDEGYDHRRNKRRRVSE). The residue at position 9 (Thr9) is a Phosphothreonine. One can recognise an MIF4G domain in the interval 31-243 (EDRLESLILR…CLWAQIRKLR (213 aa)). The disordered stretch occupies residues 669-699 (LSKADSSSSDSDDDTPHKRKKPITHADKPSE).

This sequence belongs to the NCBP1 family. Component of the nuclear cap-binding complex (CBC), a heterodimer composed of Cbp80 and Cbp20 that interacts with m7GpppG-capped RNA.

It is found in the nucleus. Component of the cap-binding complex (CBC), which binds cotranscriptionally to the 5'-cap of pre-mRNAs and is involved in various processes such as pre-mRNA splicing and RNA-mediated gene silencing (RNAi). The CBC complex is involved in miRNA-mediated RNA interference via its interaction with Ars2 and is required for primary microRNAs (miRNAs) processing. Also involved in innate immunity via the short interfering RNAs (siRNAs) processing machinery by restricting the viral RNA production. In the CBC complex, Cbp80 does not bind directly capped RNAs (m7GpppG-capped RNA) but is required to stabilize the movement of the N-terminal loop of Cbp20 and lock the CBC into a high affinity cap-binding state with the cap structure. The chain is Nuclear cap-binding protein subunit 1 (Cbp80) from Drosophila ananassae (Fruit fly).